Reading from the N-terminus, the 1139-residue chain is Dual 3',5'-cyclic-AMP and -GMP phosphodiesterase beta (1139 aa).

Disordered stretches follow at residues 1–42 (MGKV…NINK) and 154–177 (GISEDNRQNQRNADNNSLNWSTSN). The Cytoplasmic segment spans residues 1–429 (MGKVEDFEEH…LNLNNWISSR (429 aa)). Residues 9-22 (EHNKNSNQDIEKNV) show a composition bias toward basic and acidic residues. Polar residues predominate over residues 29–42 (NSNTINDQNENINK). The chain crosses the membrane as a helical span at residues 430-450 (MIIIGIVMLILSFIIWPLTTW). Topologically, residues 451 to 462 (SLKTSTWGRETY) are extracellular. The helical transmembrane segment at 463–483 (IIILFHTLMAINTLILIFFII) threads the bilayer. The Cytoplasmic segment spans residues 484 to 498 (IGSTELCKYSECMSY). A helical transmembrane segment spans residues 499 to 519 (VLFSLMVALWGLWNIAIGLTL). The Extracellular portion of the chain corresponds to 520-536 (EYNPNLSEMPTTTYELE). N-linked (GlcNAc...) asparagine glycosylation is present at N524. Residues 537–557 (MIYVLTYIYGFLPLVIIDIFF) traverse the membrane as a helical segment. Over 558–564 (PSRTKYN) the chain is Cytoplasmic. The helical transmembrane segment at 565-585 (WIIHLIFIFLNSSSIILVGSA) threads the bilayer. At 586 to 592 (KPDFVPE) the chain is on the extracellular side. Residues 593–613 (IYVVFRILAYTTLCIFLYIGS) traverse the membrane as a helical segment. Topologically, residues 614-1139 (YTSELQIRYV…TLFFIKNVSD (526 aa)) are cytoplasmic. The PDEase domain occupies 775–1098 (INISQLTKMI…IMWDTLMKEE (324 aa)). H847 (proton donor) is an active-site residue. 847–851 (HNTIH) is an a nucleoside 3',5'-cyclic phosphate binding site. Positions 851, 887, 888, and 1000 each coordinate a divalent metal cation. A nucleoside 3',5'-cyclic phosphate-binding residues include D888, D1000, and Q1052.

It belongs to the cyclic nucleotide phosphodiesterase family. Requires a divalent metal cation as cofactor.

It localises to the cell membrane. Its subcellular location is the endoplasmic reticulum membrane. It catalyses the reaction 3',5'-cyclic GMP + H2O = GMP + H(+). It carries out the reaction 3',5'-cyclic AMP + H2O = AMP + H(+). The protein operates within purine metabolism; 3',5'-cyclic GMP degradation; GMP from 3',5'-cyclic GMP: step 1/1. Its pathway is purine metabolism; 3',5'-cyclic AMP degradation; AMP from 3',5'-cyclic AMP: step 1/1. Plays a role in signal transduction by regulating the intracellular concentration of cyclic nucleotides cAMP and cGMP. Catalyzes the hydrolysis of both cAMP and cGMP to 5'-AMP and 5'-GMP, respectively. By regulating cAMP levels during the asexual blood stage and, thus PKA activation, required for merozoite invasion of erythrocytes and for the parasite development immediately following invasion. The polypeptide is Dual 3',5'-cyclic-AMP and -GMP phosphodiesterase beta (Plasmodium falciparum (isolate 3D7)).